Here is a 780-residue protein sequence, read N- to C-terminus: B3 domain-containing transcription repressor VAL2 (780 aa).

Residues 286–387 constitute a DNA-binding region (TF-B3); sequence FEKVLSASDA…KLVMGYRKAT (102 aa). The segment at 515-565 adopts a CW-type zinc-finger fold; it reads TGEQEQWVQCDACGKWRQLPVDILLPPKWSCSDNLLDPGRSSCSAPDELSP. Zn(2+) contacts are provided by Cys524, Cys527, Cys545, and Cys557. Disordered stretches follow at residues 577–608, 669–695, and 743–780; these read EFKRRRLASSNEKLNQSQDASALNSLGNAGIT, KRNKGEAGQASQQAQSQSECRDETEVE, and NTAGEQQSSDMVSTEHGSSSAAQETEKDTTNGAHDPVN. Positions 584-603 are enriched in polar residues; that stretch reads ASSNEKLNQSQDASALNSLG. Residues 674 to 686 are compositionally biased toward low complexity; sequence EAGQASQQAQSQS. Positions 743 to 765 are enriched in polar residues; sequence NTAGEQQSSDMVSTEHGSSSAAQ.

It is found in the nucleus. In terms of biological role, transcriptional repressor of gene expression involved in embryonic pathways, such as LEC1, ABI3, and FUS3. Repressor of the sugar-inducible genes involved in the seed maturation program in seedlings. Plays an essential role in regulating the transition from seed maturation to seedling growth. Functionally redundant with VAL1/HSI2. The sequence is that of B3 domain-containing transcription repressor VAL2 (VAL2) from Arabidopsis thaliana (Mouse-ear cress).